Reading from the N-terminus, the 343-residue chain is tRNA N6-adenosine threonylcarbamoyltransferase (343 aa).

Residues H111 and H115 each contribute to the Fe cation site. Residues 134–138 (LVSGG), D167, G180, and N276 each bind substrate. D304 lines the Fe cation pocket.

Belongs to the KAE1 / TsaD family. Fe(2+) is required as a cofactor.

The protein resides in the cytoplasm. The catalysed reaction is L-threonylcarbamoyladenylate + adenosine(37) in tRNA = N(6)-L-threonylcarbamoyladenosine(37) in tRNA + AMP + H(+). Required for the formation of a threonylcarbamoyl group on adenosine at position 37 (t(6)A37) in tRNAs that read codons beginning with adenine. Is involved in the transfer of the threonylcarbamoyl moiety of threonylcarbamoyl-AMP (TC-AMP) to the N6 group of A37, together with TsaE and TsaB. TsaD likely plays a direct catalytic role in this reaction. In Hahella chejuensis (strain KCTC 2396), this protein is tRNA N6-adenosine threonylcarbamoyltransferase.